We begin with the raw amino-acid sequence, 207 residues long: Small ribosomal subunit protein uS4c (207 aa).

In terms of domain architecture, S4 RNA-binding spans 92–153; it reads MRLDNILFRL…PKIYQSIITK (62 aa).

This sequence belongs to the universal ribosomal protein uS4 family. Part of the 30S ribosomal subunit. Contacts protein S5. The interaction surface between S4 and S5 is involved in control of translational fidelity.

It localises to the plastid. It is found in the chloroplast. Its function is as follows. One of the primary rRNA binding proteins, it binds directly to 16S rRNA where it nucleates assembly of the body of the 30S subunit. With S5 and S12 plays an important role in translational accuracy. In Equisetum bogotense (Horsetail), this protein is Small ribosomal subunit protein uS4c (rps4).